The sequence spans 99 residues: MAEGGFDPCECVCSHEHAMRRLINLLRQSQSYCTDTECLQELPGPSGDNGISVTMILVAWMVIALILFLLRPPNLRGSNLPGKPTSPHNGQDPPAPPVD.

Topologically, residues 1-49 are lumenal; it reads MAEGGFDPCECVCSHEHAMRRLINLLRQSQSYCTDTECLQELPGPSGDN. The chain crosses the membrane as a helical span at residues 50–70; sequence GISVTMILVAWMVIALILFLL. The Cytoplasmic segment spans residues 71 to 99; sequence RPPNLRGSNLPGKPTSPHNGQDPPAPPVD. The tract at residues 77–99 is disordered; it reads GSNLPGKPTSPHNGQDPPAPPVD.

The protein localises to the endoplasmic reticulum membrane. In Pongo abelii (Sumatran orangutan), this protein is Small integral membrane protein 14 (SMIM14).